A 430-amino-acid chain; its full sequence is Enolase (430 aa).

Glutamine 163 provides a ligand contact to (2R)-2-phosphoglycerate. Glutamate 205 serves as the catalytic Proton donor. Aspartate 242, glutamate 288, and aspartate 315 together coordinate Mg(2+). The (2R)-2-phosphoglycerate site is built by lysine 340, arginine 369, serine 370, and lysine 391. The active-site Proton acceptor is lysine 340.

This sequence belongs to the enolase family. Requires Mg(2+) as cofactor.

The protein localises to the cytoplasm. It localises to the secreted. The protein resides in the cell surface. It carries out the reaction (2R)-2-phosphoglycerate = phosphoenolpyruvate + H2O. It functions in the pathway carbohydrate degradation; glycolysis; pyruvate from D-glyceraldehyde 3-phosphate: step 4/5. Catalyzes the reversible conversion of 2-phosphoglycerate (2-PG) into phosphoenolpyruvate (PEP). It is essential for the degradation of carbohydrates via glycolysis. The sequence is that of Enolase from Onion yellows phytoplasma (strain OY-M).